The sequence spans 455 residues: Polyadenylation factor subunit 2 (455 aa).

WD repeat units lie at residues 80 to 119 (KVKH…FETI), 122 to 162 (AHDT…KELD), 164 to 203 (IHTE…QERV), 206 to 245 (GHHW…CVST), 248 to 288 (KFKH…NELM), 291 to 331 (RDEV…EKPI), and 337 to 376 (AHEK…DPNA). 2 disordered regions span residues 406-425 (EYGA…TQYN) and 430-455 (RVPE…GLSI). Residues 432 to 446 (PEIKEPTPTTDKEQR) are compositionally biased toward basic and acidic residues.

The protein localises to the nucleus. In terms of biological role, required for 3'-end cleavage and polyadenylation of pre-mRNAs. Also involved in chromosome segregation where it has a role in chromosome attachment to the mitotic spindle. In Candida glabrata (strain ATCC 2001 / BCRC 20586 / JCM 3761 / NBRC 0622 / NRRL Y-65 / CBS 138) (Yeast), this protein is Polyadenylation factor subunit 2 (PFS2).